The following is an 831-amino-acid chain: DNA helicase MCM8 (831 aa).

Residues M1–P20 are compositionally biased toward gly residues. A disordered region spans residues M1–P53. The MCM domain maps to L395 to V602. G447–S454 is a binding site for ATP.

This sequence belongs to the MCM family. As to quaternary structure, component of the MCM8-MCM9 complex, which forms a hexamer composed of mcm8 and mcm9.

It localises to the nucleus. The catalysed reaction is ATP + H2O = ADP + phosphate + H(+). In terms of biological role, component of the MCM8-MCM9 complex, a complex involved in homologous recombination repair following DNA interstrand cross-links and plays a key role during gametogenesis. The MCM8-MCM9 complex probably acts as a hexameric helicase required to process aberrant forks into homologous recombination substrates and to orchestrate homologous recombination with resection, fork stabilization and fork restart. In eggs, required for elongation during DNA replication by facilitating the recruitment of rpa2/rpa34 and stimulating the processivity of DNA polymerases at replication foci. Probably not required for DNA replication in other cells. The chain is DNA helicase MCM8 (mcm8) from Xenopus laevis (African clawed frog).